Consider the following 415-residue polypeptide: Probable beta-1,4-xylosyltransferase IRX10L (415 aa).

A topological domain (cytoplasmic) is located at residue Met1. The chain crosses the membrane as a helical; Signal-anchor for type II membrane protein span at residues Lys2 to Phe22. Residues Arg23–Trp415 lie on the Lumenal side of the membrane. 2 N-linked (GlcNAc...) asparagine glycosylation sites follow: Asn142 and Asn403.

The protein belongs to the glycosyltransferase 47 family. Present in the xylem and phloem, and, to a lower extent, in interfascicular cells. Expressed in the root tip, shoot apical meristem (SAM), xylem cells of roots and stems, and in the vasculature of roots, cotyledons and leaves.

The protein resides in the golgi apparatus membrane. In terms of biological role, involved in the synthesis of the hemicellulose glucuronoxylan, a major component of secondary cell walls. Probably involved in the elongation of glucuronoxylan xylosyl backbone. This is Probable beta-1,4-xylosyltransferase IRX10L (IRX10L) from Arabidopsis thaliana (Mouse-ear cress).